A 172-amino-acid polypeptide reads, in one-letter code: NADH-ubiquinone oxidoreductase chain 6 (172 aa).

Helical transmembrane passes span 1–21 (MTNYMFILSLLFLTGCLGLAL), 26–48 (IYGGLGLIVSGCIGCLMVLGFGG), 52–74 (GLMVFLIYLGGMLVVFGYTTAMA), 86–106 (WFIFSFFVLGLFMELVVFYLF), and 147–167 (CATWMMVVAGWSLFAGIFIII).

The protein belongs to the complex I subunit 6 family. In terms of assembly, core subunit of respiratory chain NADH dehydrogenase (Complex I) which is composed of 45 different subunits.

Its subcellular location is the mitochondrion inner membrane. The enzyme catalyses a ubiquinone + NADH + 5 H(+)(in) = a ubiquinol + NAD(+) + 4 H(+)(out). Its function is as follows. Core subunit of the mitochondrial membrane respiratory chain NADH dehydrogenase (Complex I) which catalyzes electron transfer from NADH through the respiratory chain, using ubiquinone as an electron acceptor. Essential for the catalytic activity and assembly of complex I. The chain is NADH-ubiquinone oxidoreductase chain 6 from Rattus norvegicus (Rat).